We begin with the raw amino-acid sequence, 391 residues long: N-acetylaspartylglutamate synthase A (391 aa).

The region spanning 115-300 (FQELAGHGVP…VGGIIADYTM (186 aa)) is the ATP-grasp domain. Residues Lys-154, 189-199 (QKYVKESHGKD), and Arg-215 each bind ATP. Positions 260, 273, and 275 each coordinate Mg(2+). Residues Asp-260, Glu-273, and Asn-275 each contribute to the Mn(2+) site. Ser-319 is subject to Phosphoserine. The segment covering 341-350 (TINSGSTSSE) has biased composition (polar residues). The disordered stretch occupies residues 341–379 (TINSGSTSSESEPELGEIRDSSASTMGAPPSMLPEPGYN).

It belongs to the RimK family. Mg(2+) serves as cofactor. The cofactor is Mn(2+).

It is found in the cytoplasm. The enzyme catalyses N-acetyl-L-aspartate + L-glutamate + ATP = N-acetyl-L-aspartyl-L-glutamate + ADP + phosphate + H(+). It catalyses the reaction N-acetyl-L-aspartate + 2 L-glutamate + 2 ATP = N-acetyl-L-aspartyl-L-glutamyl-L-glutamate + 2 ADP + 2 phosphate + 2 H(+). Catalyzes the synthesis of N-acetyl-L-aspartyl-L-glutamate (NAAG) and N-acetyl-L-aspartyl-L-glutamyl-L-glutamate. In Homo sapiens (Human), this protein is N-acetylaspartylglutamate synthase A (RIMKLA).